The primary structure comprises 447 residues: Putative branched-chain amino acid carrier protein SERP0977 (447 aa).

The next 12 helical transmembrane spans lie at 5–25, 40–60, 74–94, 114–134, 143–163, 193–213, 229–249, 290–310, 317–337, 350–370, 382–402, and 417–437; these read TWIIGFTLFAMFFGAGNLIFP, ILAFALTGIGLPLLGVVVGAL, PRFSLIFLIIIYLTIGPLFAI, GNLALFIFTVIYFLIVLYLCL, IGSLLTPLLLITIVAMIIKGF, GYLTMDAIASIAFSMIVVNAI, IIAGLIAAIALVFIYISLGYI, LLGIIVSLACLTTACGLIVSV, IIPKIPYKVFVVFFILVSFIL, VPVLSVIYPVAITVILLILIA, IPLIIVAIESILSLITTQGWI, and LEWFPIAVVATLVGYMISYFV.

The protein belongs to the branched chain amino acid transporter family.

It is found in the cell membrane. In terms of biological role, component of the transport system for branched-chain amino acids (leucine, isoleucine and valine), which is coupled to a proton motive force. This is Putative branched-chain amino acid carrier protein SERP0977 from Staphylococcus epidermidis (strain ATCC 35984 / DSM 28319 / BCRC 17069 / CCUG 31568 / BM 3577 / RP62A).